The chain runs to 335 residues: Methionine aminopeptidase 1D, mitochondrial (335 aa).

A mitochondrion-targeting transit peptide spans 1 to 19 (MAAPIGVPLLVRGGCQRIL). His161 provides a ligand contact to substrate. Positions 178, 189, and 252 each coordinate a divalent metal cation. His259 lines the substrate pocket. The a divalent metal cation site is built by Glu284 and Glu315.

The protein belongs to the peptidase M24A family. Methionine aminopeptidase type 1 subfamily. The cofactor is Co(2+). Zn(2+) is required as a cofactor. Requires Mn(2+) as cofactor. It depends on Fe(2+) as a cofactor.

It localises to the mitochondrion. It catalyses the reaction Release of N-terminal amino acids, preferentially methionine, from peptides and arylamides.. Removes the N-terminal methionine from nascent proteins. The N-terminal methionine is often cleaved when the second residue in the primary sequence is small and uncharged (Met-Ala-, Cys, Gly, Pro, Ser, Thr, or Val). Requires deformylation of the N(alpha)-formylated initiator methionine before it can be hydrolyzed. This chain is Methionine aminopeptidase 1D, mitochondrial (Metap1d), found in Mus musculus (Mouse).